A 553-amino-acid polypeptide reads, in one-letter code: Methyl-coenzyme M reductase subunit alpha (553 aa).

Glutamine 151 contributes to the coenzyme F430 binding site. Coenzyme B-binding positions include arginine 229, 260–261 (KH), and arginine 274. The coenzyme M site is built by tyrosine 336 and tyrosine 447.

It belongs to the methyl-coenzyme M reductase alpha subunit family. As to quaternary structure, MCR is a hexamer of two alpha, two beta, and two gamma chains, forming a dimer of heterotrimers. Coenzyme F430 serves as cofactor.

It localises to the cytoplasm. It carries out the reaction coenzyme B + methyl-coenzyme M = methane + coenzyme M-coenzyme B heterodisulfide. The protein operates within one-carbon metabolism; methyl-coenzyme M reduction; methane from methyl-coenzyme M: step 1/1. Component of the methyl-coenzyme M reductase (MCR) I that catalyzes the reductive cleavage of methyl-coenzyme M (CoM-S-CH3 or 2-(methylthio)ethanesulfonate) using coenzyme B (CoB or 7-mercaptoheptanoylthreonine phosphate) as reductant which results in the production of methane and the mixed heterodisulfide of CoB and CoM (CoM-S-S-CoB). This is the final step in methanogenesis. The polypeptide is Methyl-coenzyme M reductase subunit alpha (mcrA) (Methanococcus vannielii).